A 267-amino-acid chain; its full sequence is MAHNRITPLMNEQKKLLIAYYMPEYPVAGATLPVLEALQNSGADIIELGMPYSDPIGDGPVIQDAAQVAIRNGVHIGSLLDLVRKARAGEGCVKITVPIVLMGYCNPLIAYGGDCFLNDASEAGVDGLLIPDLPPEEAEDFLSRAKSFGLSVVFLISPVTQPERIRQIDALSTDFSYCLAVNATTGTGKLDEAERDADIESYLQRVSEHTRKKFVVGFGIRNRARVEKMCALADGAVVGTALLQAIAGAATPSQAASMAAGFWKTLR.

Catalysis depends on proton acceptor residues glutamate 47 and aspartate 58.

It belongs to the TrpA family. As to quaternary structure, tetramer of two alpha and two beta chains.

The catalysed reaction is (1S,2R)-1-C-(indol-3-yl)glycerol 3-phosphate + L-serine = D-glyceraldehyde 3-phosphate + L-tryptophan + H2O. It functions in the pathway amino-acid biosynthesis; L-tryptophan biosynthesis; L-tryptophan from chorismate: step 5/5. Its function is as follows. The alpha subunit is responsible for the aldol cleavage of indoleglycerol phosphate to indole and glyceraldehyde 3-phosphate. The protein is Tryptophan synthase alpha chain of Prosthecochloris aestuarii (strain DSM 271 / SK 413).